An 81-amino-acid polypeptide reads, in one-letter code: Defensin-like protein 266 (81 aa).

The N-terminal stretch at 1-26 (MEKIVFRKIVFVAFLLSLSCLLEGEA) is a signal peptide. Intrachain disulfides connect cysteine 40–cysteine 58, cysteine 46–cysteine 63, and cysteine 50–cysteine 65.

The protein belongs to the DEFL family.

Its subcellular location is the secreted. In Arabidopsis thaliana (Mouse-ear cress), this protein is Defensin-like protein 266.